Here is a 102-residue protein sequence, read N- to C-terminus: Small ribosomal subunit protein uS10 (102 aa).

The protein belongs to the universal ribosomal protein uS10 family. In terms of assembly, part of the 30S ribosomal subunit.

Involved in the binding of tRNA to the ribosomes. The sequence is that of Small ribosomal subunit protein uS10 from Clostridium perfringens (strain ATCC 13124 / DSM 756 / JCM 1290 / NCIMB 6125 / NCTC 8237 / Type A).